Reading from the N-terminus, the 511-residue chain is DELLA protein RGL1 (511 aa).

Positions 1-11 (MKREHNHRESS) are enriched in basic and acidic residues. A disordered region spans residues 1 to 20 (MKREHNHRESSAGEGGSSSM). The short motif at 32 to 36 (DELLV) is the DELLA motif element. The short motif at 54-58 (LEQLE) is the LEXLE motif element. Residues 73–77 (VHYNP) carry the VHYNP motif motif. Residues 143-506 (LDSQETGVRL…RPLIATSAWR (364 aa)) form the GRAS domain. The tract at residues 150–204 (VRLVHALLACAEAVQQNNLKLADALVKHVGLLASSQAGAMRKVATYFAEGLARRI) is leucine repeat I (LRI). The LxCxE motif motif lies at 157–161 (LACAE). The interval 223–288 (QIHFYESCPY…NGPPDFRLTG (66 aa)) is VHIID. The short motif at 254–258 (VHVID) is the VHIID element. The tract at residues 298 to 330 (EVGWKLGQLASTIGVNFEFKSIALNNLSDLKPE) is leucine repeat II (LRII). The tract at residues 341–427 (VAVNSVFELH…ELFLGRQILN (87 aa)) is PFYRE. An LXXLL motif motif is present at residues 349-353 (LHRLL). The SAW stretch occupies residues 430 to 506 (ACEGEDRVER…RPLIATSAWR (77 aa)).

Belongs to the GRAS family. DELLA subfamily. Interacts directly with the GID2/SLY1 component of the SCF(GID2) complex. Interacts (via N-terminus) with GID1A, GID1B and GID1B (via N-terminus). Interacts with the BOI proteins BOI, BRG1, BRG2 and BRG3. Binds to and coactivates GAF1/IDD2 and ENY/IDD1. In terms of processing, phosphorylated. Post-translationally, may be ubiquitinated, as suggested by its interaction with GID2. Ubiquitination is however unsure since in contrast to other DELLA proteins, it is not ubiquitinated and degraded upon GA application. Nevertheless, ubiquitination may be triggered by other processes. In terms of tissue distribution, predominantly expressed in germinating seeds and flowers and siliques. Highly expressed in inflorescences and weakly or not expressed in rosette leaves, etiolated seedlings, siliques, mature stems and roots. RGA and GAI transcripts were detected at slightly varying levels in all tissues examined. RGL2 signal was undetected, and RGL3 signal was very weak in all tissues examined (rosette leaves, seedlings, inflorescences, and siliques) except inflorescences. In the flower, it is expressed in developing ovules as well as in developing anthers throughout microspore development.

The protein localises to the nucleus. Probable transcriptional regulator that acts as a repressor of the gibberellin (GA) signaling pathway. No effect of the BOI proteins on its stability. Probably acts by participating in large multiprotein complexes that repress transcription of GA-inducible genes. Has overlapping but distinct roles in GA signaling compared to RGA and GAI. Regulates the floral development. May also participate in seed germination and in ovule and anther development. Its activity is probably regulated by other phytohormones such as auxin and ethylene. This Arabidopsis thaliana (Mouse-ear cress) protein is DELLA protein RGL1 (RGL1).